We begin with the raw amino-acid sequence, 564 residues long: Phomacin cluster regulator phmR (564 aa).

Residues 33–64 (CDRCRGHKLRCIRDQMTVDSPCQRCRKAREKC) constitute a DNA-binding region (zn(2)-C6 fungal-type). 3 disordered regions span residues 68-93 (SSTRPVPARLNRSSQGHKLPGATSSA), 152-197 (DFAD…NPFL), and 252-278 (PIHPPTMASSHRTHSTASNDSSKDSTT). Composition is skewed to polar residues over residues 182–192 (ITPTSQGTTAV) and 258–278 (MASSHRTHSTASNDSSKDSTT).

It is found in the nucleus. Functionally, transcription factor that specifically regulates the expression of the gene cluster that mediates the biosynthesis of the mycotoxins phomacins, leucine-derived cytochalasans with potent actin polymerization-inhibitory activities and monocot-specific antigerminative activities. This chain is Phomacin cluster regulator phmR, found in Phaeosphaeria nodorum (strain SN15 / ATCC MYA-4574 / FGSC 10173) (Glume blotch fungus).